The chain runs to 660 residues: Pentatricopeptide repeat-containing protein At4g20090 (660 aa).

PPR repeat units lie at residues 76-110 (GDST…NRVI), 111-141 (IERS…MVDE), 147-181 (SVKS…NMNM), 186-220 (NGLS…KCLP), 221-255 (DGYT…GCSP), 256-290 (SPVI…GCVP), 291-325 (NEVT…KCIP), 326-360 (NDVT…GYHL), 361-395 (NQHI…GCKP), 396-430 (NIVV…GCLP), 431-465 (NAYT…GCSR), 466-500 (NKFC…GIKP), 501-535 (DTVA…EEPK), 539-573 (DVVT…GCDP), and 574-609 (DVIT…LLKR).

Belongs to the PPR family. P subfamily.

Its function is as follows. May play a role in embryogenesis. The protein is Pentatricopeptide repeat-containing protein At4g20090 (EMB1025) of Arabidopsis thaliana (Mouse-ear cress).